A 60-amino-acid chain; its full sequence is Metallothionein A (60 aa).

A beta region spans residues 1–28; the sequence is MDPCQCSKSGTCNCGGSCTCTNCSCKSC. A divalent metal cation-binding residues include C4, C6, C12, C14, C18, C20, C23, C25, C28, C32, C33, C35, C36, C40, C43, C47, C49, C54, C58, and C59. The tract at residues 29–60 is alpha; sequence KKSCCPCCPSGCTKCASGCVCKGKTCDTSCCQ.

The protein belongs to the metallothionein superfamily. Type 1 family.

In terms of biological role, metallothioneins have a high content of cysteine residues that bind various heavy metals. In Trematomus bernacchii (Emerald rockcod), this protein is Metallothionein A (mta).